A 250-amino-acid chain; its full sequence is Probable transcriptional regulatory protein SYNPCC7002_A1640 (250 aa).

It belongs to the TACO1 family.

The protein localises to the cytoplasm. The protein is Probable transcriptional regulatory protein SYNPCC7002_A1640 of Picosynechococcus sp. (strain ATCC 27264 / PCC 7002 / PR-6) (Agmenellum quadruplicatum).